The following is a 470-amino-acid chain: Ribulose bisphosphate carboxylase large chain (470 aa).

Lysine 5 carries the post-translational modification N6,N6,N6-trimethyllysine. The substrate site is built by asparagine 114 and threonine 164. Catalysis depends on lysine 166, which acts as the Proton acceptor. Lysine 168 lines the substrate pocket. Positions 192, 194, and 195 each coordinate Mg(2+). N6-carboxylysine is present on lysine 192. Residue histidine 285 is the Proton acceptor of the active site. Substrate contacts are provided by arginine 286, histidine 318, and serine 370.

This sequence belongs to the RuBisCO large chain family. Type I subfamily. Heterohexadecamer of 8 large chains and 8 small chains; disulfide-linked. The disulfide link is formed within the large subunit homodimers. The cofactor is Mg(2+). The disulfide bond which can form in the large chain dimeric partners within the hexadecamer appears to be associated with oxidative stress and protein turnover.

Its subcellular location is the plastid. The protein resides in the chloroplast. The catalysed reaction is 2 (2R)-3-phosphoglycerate + 2 H(+) = D-ribulose 1,5-bisphosphate + CO2 + H2O. It carries out the reaction D-ribulose 1,5-bisphosphate + O2 = 2-phosphoglycolate + (2R)-3-phosphoglycerate + 2 H(+). Its function is as follows. RuBisCO catalyzes two reactions: the carboxylation of D-ribulose 1,5-bisphosphate, the primary event in carbon dioxide fixation, as well as the oxidative fragmentation of the pentose substrate in the photorespiration process. Both reactions occur simultaneously and in competition at the same active site. This is Ribulose bisphosphate carboxylase large chain from Kigelia africana (Sausage tree).